The sequence spans 192 residues: Probable nicotinate-nucleotide adenylyltransferase (192 aa).

This sequence belongs to the NadD family.

It carries out the reaction nicotinate beta-D-ribonucleotide + ATP + H(+) = deamido-NAD(+) + diphosphate. The protein operates within cofactor biosynthesis; NAD(+) biosynthesis; deamido-NAD(+) from nicotinate D-ribonucleotide: step 1/1. Its function is as follows. Catalyzes the reversible adenylation of nicotinate mononucleotide (NaMN) to nicotinic acid adenine dinucleotide (NaAD). This chain is Probable nicotinate-nucleotide adenylyltransferase, found in Bradyrhizobium sp. (strain ORS 278).